A 684-amino-acid polypeptide reads, in one-letter code: Extracellular lipase (684 aa).

The first 48 residues, 1–48 (MKKKLIYAAVVSALLAGCGGSDDNKGDTSSYLDYLLTGSNAVGPSALA), serve as a signal peptide directing secretion. Disordered stretches follow at residues 321–405 (SIPV…ADWG) and 462–493 (QRER…GDRS). Basic and acidic residues predominate over residues 385 to 405 (ADCRSDPPERAAGRGEQADWG). Catalysis depends on Ser568, which acts as the Nucleophile.

Belongs to the AB hydrolase superfamily. Lipase family. As to quaternary structure, monomer.

It localises to the secreted. The catalysed reaction is a triacylglycerol + H2O = a diacylglycerol + a fatty acid + H(+). Functionally, the optimum chain lengths for the acyl moiety is C6 for ester hydrolysis and C6 and C8 for triacylglycerol hydrolysis. The sequence is that of Extracellular lipase from Aeromonas hydrophila.